Consider the following 263-residue polypeptide: Ribonuclease HII (263 aa).

The region spanning 74-262 (EHVAGLDEVG…VQETAATRQT (189 aa)) is the RNase H type-2 domain. Asp-80, Glu-81, and Asp-172 together coordinate a divalent metal cation.

This sequence belongs to the RNase HII family. Requires Mn(2+) as cofactor. Mg(2+) serves as cofactor.

It is found in the cytoplasm. It carries out the reaction Endonucleolytic cleavage to 5'-phosphomonoester.. Functionally, endonuclease that specifically degrades the RNA of RNA-DNA hybrids. The sequence is that of Ribonuclease HII (rnhB) from Halalkalibacterium halodurans (strain ATCC BAA-125 / DSM 18197 / FERM 7344 / JCM 9153 / C-125) (Bacillus halodurans).